Here is a 390-residue protein sequence, read N- to C-terminus: Multidrug export protein EmrA (390 aa).

Residues M1 to L24 are Cytoplasmic-facing. Residues L25–V45 traverse the membrane as a helical segment. At L46–G390 the chain is on the periplasmic side. The stretch at I120–Q180 forms a coiled coil.

This sequence belongs to the membrane fusion protein (MFP) (TC 8.A.1) family. As to quaternary structure, homodimer and homotrimer. Part of the tripartite efflux system EmrAB-TolC, which is composed of an inner membrane transporter, EmrB, a periplasmic membrane fusion protein, EmrA, and an outer membrane component, TolC. The complex forms a large protein conduit and can translocate molecules across both the inner and outer membranes. Interacts with EmrB. EmrAB complex forms a dimer in vitro.

Its subcellular location is the cell inner membrane. In terms of biological role, part of the tripartite efflux system EmrAB-TolC, which confers resistance to antibiotics such as CCCP, FCCP, 2,4-dinitrophenol and nalidixic acid. EmrA is a drug-binding protein that provides a physical link between EmrB and TolC. The sequence is that of Multidrug export protein EmrA (emrA) from Escherichia coli (strain K12).